Here is a 307-residue protein sequence, read N- to C-terminus: MQYSTLAGQTDNSLVSNNFGFLRLPLNFMPYESHADWVITGVPYDMAVSGRSGARFGPEAIRRASVNLAWEHRRFPWTFDVRERLNIIDCGDLVFSFGDSRDFVEKMEAHAGKLLSFGKRCLSLGGDHFITLPLLRAHARYFGKLALIHFDAHTDTYDNGSEYDHGTMFYTAPKEGLIDPSRSVQIGIRTEHSKKLPFTVLSAPKVNEDSVEETVRKIKETVGNMPVYLTFDIDCLDPSFAPGTGTPVCGGLSSDRALKILRGLTDLDIVGMDVVEVAPSYDQSDITALAGATIALEMLYLQGAKKD.

Mn(2+) is bound by residues His-128, Asp-151, His-153, Asp-155, Asp-232, and Asp-234.

This sequence belongs to the arginase family. Agmatinase subfamily. The cofactor is Mn(2+).

It catalyses the reaction agmatine + H2O = urea + putrescine. It functions in the pathway amine and polyamine biosynthesis; putrescine biosynthesis via agmatine pathway; putrescine from agmatine: step 1/1. In terms of biological role, catalyzes the formation of putrescine from agmatine. The protein is Agmatinase of Neisseria gonorrhoeae (strain ATCC 700825 / FA 1090).